The following is a 108-amino-acid chain: UPF0145 protein ACIAD2946 (108 aa).

This sequence belongs to the UPF0145 family.

The protein is UPF0145 protein ACIAD2946 of Acinetobacter baylyi (strain ATCC 33305 / BD413 / ADP1).